The primary structure comprises 571 residues: Proline-rich protein 35 (571 aa).

Disordered stretches follow at residues 1-27 (MSRE…PHYI), 79-187 (GSTT…EGSV), 286-402 (APVS…GSPE), and 476-571 (GPQA…GAEV). Residues 16–26 (ARSRKPKKPHY) show a composition bias toward basic residues. The segment covering 165–175 (GMGGDPRGVGA) has biased composition (gly residues). Positions 316–336 (TPRDPGQEGELERAAQSDPRR) are enriched in basic and acidic residues. Polar residues predominate over residues 351–367 (PSLTRFCSRSSLPTGSS). A compositionally biased stretch (pro residues) spans 380 to 399 (PETPGPEGPLPLQPRGPVPG).

The sequence is that of Proline-rich protein 35 (PRR35) from Homo sapiens (Human).